The sequence spans 2170 residues: Supervillin (2170 aa).

The interaction with MYLK stretch occupies residues 1–167 (MKRKERIARR…NSRHSRTESG (167 aa)). 5 disordered regions span residues 37–94 (EDTP…HSLE), 107–327 (RRRQ…QSES), 413–444 (PEPLERSPKSLLTSEDDRLVRGHKDPSGNKDL), 511–546 (DYTGPPQLQVPRHKDEAPSQELELQSSRAEGPGAEA), and 567–643 (RASK…EDEE). Position 50 is a phosphoserine (Ser-50). Composition is skewed to polar residues over residues 63-73 (PGSSLEKQTPS) and 81-90 (GIHSSGSMDT). The segment covering 134-166 (SRKDPDVTERRGKSDKQEEQSKDANSRHSRTES) has biased composition (basic and acidic residues). Polar residues predominate over residues 167–195 (GPRTSLVASQDCTPLGSNMSDQEQLLNVE). Residues Ser-220, Ser-227, and Ser-241 each carry the phosphoserine modification. Polar residues predominate over residues 230–241 (QIPSSPLQQPAS). Basic and acidic residues-rich tracts occupy residues 261–272 (PTHEWFLQRDSE) and 286–297 (KVREKLVKEESA). The span at 298 to 313 (RSSPELTSESLTQRRQ) shows a compositional bias: polar residues. Ser-299 and Ser-300 each carry phosphoserine. The span at 427–444 (EDDRLVRGHKDPSGNKDL) shows a compositional bias: basic and acidic residues. Composition is skewed to basic and acidic residues over residues 570 to 582 (KKPELQSRVERSA) and 606 to 615 (ESRKTSERFR). Phosphoserine is present on residues Ser-632, Ser-666, Ser-728, and Ser-761. The tract at residues 743-771 (ASAHQKALARDQANEGRESAEPGEPDSST) is disordered. Residues 750–762 (LARDQANEGRESA) are compositionally biased toward basic and acidic residues. Position 809 is a phosphotyrosine (Tyr-809). Thr-811 is modified (phosphothreonine). Phosphoserine occurs at positions 857, 877, and 881. The interval 887-909 (AWRPLVEHSGSKGMPGESGKTES) is disordered. Residues Ser-960, Ser-1011, Ser-1031, and Ser-1077 each carry the phosphoserine modification. The interval 1117-1137 (HTQEVEQSLKKKRVTESRESQ) is disordered. Basic and acidic residues predominate over residues 1119–1137 (QEVEQSLKKKRVTESRESQ). Arg-1159 bears the Omega-N-methylarginine mark. Phosphoserine is present on residues Ser-1181 and Ser-1184. At Thr-1186 the chain carries Phosphothreonine. A phosphoserine mark is found at Ser-1190, Ser-1278, and Ser-1361. Positions 1375–1643 (SNINLRSVNL…KFLDWTELKR (269 aa)) are interaction with NEB. Gelsolin-like repeat units lie at residues 1397-1496 (KKLM…LGGQ), 1516-1638 (IETN…FLDW), 1708-1818 (VSVD…FQGG), 1837-1938 (WRLY…LGRR), and 1971-2078 (ATEF…FPSW). The HP domain maps to 2107–2170 (KLCKTIYPLA…VNLKKSKGLF (64 aa)).

It belongs to the villin/gelsolin family. As to quaternary structure, associates with F-actin. Interacts with NEB. Interacts with MYH9. Interacts with MYLK. Interacts with TASOR. In terms of assembly, interacts with TRIP6. Interacts with DYNLT1. Interacts with KIF14; at midbody during cytokinesis. As to expression, expressed in the heart, tongue and granular cells within the cerebellum.

The protein resides in the cell membrane. The protein localises to the cytoplasm. Its subcellular location is the cytoskeleton. It localises to the cell projection. It is found in the invadopodium. The protein resides in the podosome. The protein localises to the midbody. Its subcellular location is the cleavage furrow. In terms of biological role, forms a high-affinity link between the actin cytoskeleton and the membrane. Is among the first costameric proteins to assemble during myogenesis and it contributes to myogenic membrane structure and differentiation. Appears to be involved in myosin II assembly. May modulate myosin II regulation through MLCK during cell spreading, an initial step in cell migration. May play a role in invadopodial function. May be involved in modulation of focal adhesions. Supervillin-mediated down-regulation of focal adhesions involves binding to TRIP6. Plays a role in cytokinesis through KIF14 interaction. The sequence is that of Supervillin (Svil) from Mus musculus (Mouse).